We begin with the raw amino-acid sequence, 380 residues long: tRNA pseudouridine synthase B (380 aa).

The active-site Nucleophile is the D63. Residues 309–339 (QNVEDDNDDNDDNDDNDDNDDNDDNDDNDDN) are disordered. Over residues 311–338 (VEDDNDDNDDNDDNDDNDDNDDNDDNDD) the composition is skewed to acidic residues.

Belongs to the pseudouridine synthase TruB family. Type 1 subfamily.

The enzyme catalyses uridine(55) in tRNA = pseudouridine(55) in tRNA. Responsible for synthesis of pseudouridine from uracil-55 in the psi GC loop of transfer RNAs. This is tRNA pseudouridine synthase B from Psychrobacter arcticus (strain DSM 17307 / VKM B-2377 / 273-4).